Reading from the N-terminus, the 168-residue chain is ATP synthase subunit b (168 aa).

A helical membrane pass occupies residues 10–30; the sequence is STILGNFILVTASFAVLIILI.

Belongs to the ATPase B chain family. F-type ATPases have 2 components, F(1) - the catalytic core - and F(0) - the membrane proton channel. F(1) has five subunits: alpha(3), beta(3), gamma(1), delta(1), epsilon(1). F(0) has three main subunits: a(1), b(2) and c(10-14). The alpha and beta chains form an alternating ring which encloses part of the gamma chain. F(1) is attached to F(0) by a central stalk formed by the gamma and epsilon chains, while a peripheral stalk is formed by the delta and b chains.

It is found in the cell membrane. Its function is as follows. F(1)F(0) ATP synthase produces ATP from ADP in the presence of a proton or sodium gradient. F-type ATPases consist of two structural domains, F(1) containing the extramembraneous catalytic core and F(0) containing the membrane proton channel, linked together by a central stalk and a peripheral stalk. During catalysis, ATP synthesis in the catalytic domain of F(1) is coupled via a rotary mechanism of the central stalk subunits to proton translocation. In terms of biological role, component of the F(0) channel, it forms part of the peripheral stalk, linking F(1) to F(0). In Streptococcus suis (strain 98HAH33), this protein is ATP synthase subunit b.